A 242-amino-acid chain; its full sequence is Coiled-coil domain-containing protein 107 (242 aa).

The first 24 residues, 1-24, serve as a signal peptide directing secretion; the sequence is MEGAGPVLSILGLLLVSAPFGVLG. A disordered region spans residues 27–62; sequence PSADLGAHPERGSQVSPGTTEPRRQPPPKDQRERAR. The span at 47-62 shows a compositional bias: basic and acidic residues; the sequence is EPRRQPPPKDQRERAR. Residues 65–85 form a helical membrane-spanning segment; sequence SLSLGALYTAAVVAFVLFKCL. A coiled-coil region spans residues 97–132; that stretch reads EKNKKKSSQSEQQLVQLTQQLAQTEQHLNHLMTQLD. The interval 186 to 210 is disordered; sequence KEDQEAGNSQAWEEPITWSPETRNL.

It is found in the membrane. The polypeptide is Coiled-coil domain-containing protein 107 (Ccdc107) (Mus musculus (Mouse)).